The primary structure comprises 274 residues: Undecaprenyl-diphosphatase 1 (274 aa).

8 helical membrane-spanning segments follow: residues 7-27 (LEIF…WLPV), 48-68 (FIST…LVIF), 88-108 (VRLW…GILF), 115-135 (LFFN…IMIG), 151-171 (VTYK…IPGT), 189-209 (YVAA…ASAL), 221-241 (FEWL…IVVI), and 253-273 (FKVF…YFFL).

It belongs to the UppP family.

It is found in the cell membrane. The enzyme catalyses di-trans,octa-cis-undecaprenyl diphosphate + H2O = di-trans,octa-cis-undecaprenyl phosphate + phosphate + H(+). In terms of biological role, catalyzes the dephosphorylation of undecaprenyl diphosphate (UPP). Confers resistance to bacitracin. The polypeptide is Undecaprenyl-diphosphatase 1 (Clostridioides difficile (strain 630) (Peptoclostridium difficile)).